We begin with the raw amino-acid sequence, 521 residues long: Cytochrome P450 1A1 (521 aa).

Residue Phe-229 coordinates substrate. Cys-463 provides a ligand contact to heme.

It belongs to the cytochrome P450 family. Heme serves as cofactor.

Its subcellular location is the endoplasmic reticulum membrane. It is found in the microsome membrane. The enzyme catalyses an organic molecule + reduced [NADPH--hemoprotein reductase] + O2 = an alcohol + oxidized [NADPH--hemoprotein reductase] + H2O + H(+). Its function is as follows. Cytochromes P450 are a group of heme-thiolate monooxygenases. They oxidize a variety of structurally unrelated compounds, including steroids, fatty acids, and xenobiotics. This chain is Cytochrome P450 1A1 (cyp1a1), found in Chelon saliens (Leaping mullet).